The sequence spans 892 residues: Putative disease resistance protein At4g10780 (892 aa).

Residues 24–63 are a coiled coil; that stretch reads SLGNYIHKLKDNIVALEKAIEDLTATRDDVLRRVQMEEGK. The NB-ARC domain maps to 137–440; that stretch reads IVAAPAPKLE…ICEGFIDGNI (304 aa). 180 to 187 serves as a coordination point for ATP; that stretch reads GMGGVGKT. LRR repeat units lie at residues 515–536, 537–559, 562–584, 586–608, 609–631, and 632–654; these read AVRR…PECP, ELTT…FFRH, KLVV…ISEL, ALRY…QDLK, TLIH…SKLS, and SLRT…KELH.

It belongs to the disease resistance NB-LRR family.

Potential disease resistance protein. In Arabidopsis thaliana (Mouse-ear cress), this protein is Putative disease resistance protein At4g10780.